The following is a 378-amino-acid chain: Succinyl-diaminopimelate desuccinylase (378 aa).

H68 serves as a coordination point for Zn(2+). D70 is an active-site residue. Residue D101 participates in Zn(2+) binding. E135 serves as the catalytic Proton acceptor. Residues E136, E164, and H350 each contribute to the Zn(2+) site.

Belongs to the peptidase M20A family. DapE subfamily. As to quaternary structure, homodimer. Zn(2+) serves as cofactor. Requires Co(2+) as cofactor.

It carries out the reaction N-succinyl-(2S,6S)-2,6-diaminopimelate + H2O = (2S,6S)-2,6-diaminopimelate + succinate. The protein operates within amino-acid biosynthesis; L-lysine biosynthesis via DAP pathway; LL-2,6-diaminopimelate from (S)-tetrahydrodipicolinate (succinylase route): step 3/3. Functionally, catalyzes the hydrolysis of N-succinyl-L,L-diaminopimelic acid (SDAP), forming succinate and LL-2,6-diaminopimelate (DAP), an intermediate involved in the bacterial biosynthesis of lysine and meso-diaminopimelic acid, an essential component of bacterial cell walls. The polypeptide is Succinyl-diaminopimelate desuccinylase (Acinetobacter baumannii (strain ACICU)).